A 501-amino-acid polypeptide reads, in one-letter code: ATP synthase subunit alpha (501 aa).

169–176 (GDRQTGKT) contacts ATP.

Belongs to the ATPase alpha/beta chains family. As to quaternary structure, F-type ATPases have 2 components, CF(1) - the catalytic core - and CF(0) - the membrane proton channel. CF(1) has five subunits: alpha(3), beta(3), gamma(1), delta(1), epsilon(1). CF(0) has three main subunits: a(1), b(2) and c(9-12). The alpha and beta chains form an alternating ring which encloses part of the gamma chain. CF(1) is attached to CF(0) by a central stalk formed by the gamma and epsilon chains, while a peripheral stalk is formed by the delta and b chains.

Its subcellular location is the cell membrane. It catalyses the reaction ATP + H2O + 4 H(+)(in) = ADP + phosphate + 5 H(+)(out). Its function is as follows. Produces ATP from ADP in the presence of a proton gradient across the membrane. The alpha chain is a regulatory subunit. The chain is ATP synthase subunit alpha from Streptococcus agalactiae serotype Ia (strain ATCC 27591 / A909 / CDC SS700).